Reading from the N-terminus, the 124-residue chain is Large ribosomal subunit protein uL22 (124 aa).

This sequence belongs to the universal ribosomal protein uL22 family. In terms of assembly, part of the 50S ribosomal subunit.

This protein binds specifically to 23S rRNA; its binding is stimulated by other ribosomal proteins, e.g. L4, L17, and L20. It is important during the early stages of 50S assembly. It makes multiple contacts with different domains of the 23S rRNA in the assembled 50S subunit and ribosome. In terms of biological role, the globular domain of the protein is located near the polypeptide exit tunnel on the outside of the subunit, while an extended beta-hairpin is found that lines the wall of the exit tunnel in the center of the 70S ribosome. This is Large ribosomal subunit protein uL22 from Treponema pallidum (strain Nichols).